The primary structure comprises 418 residues: Glutamyl-tRNA reductase (418 aa).

Residues 49–52, S109, 114–116, and Q120 contribute to the substrate site; these read TCNR and EPQ. The Nucleophile role is filled by C50. 189–194 serves as a coordination point for NADP(+); that stretch reads GAGETI.

It belongs to the glutamyl-tRNA reductase family. Homodimer.

The enzyme catalyses (S)-4-amino-5-oxopentanoate + tRNA(Glu) + NADP(+) = L-glutamyl-tRNA(Glu) + NADPH + H(+). The protein operates within porphyrin-containing compound metabolism; protoporphyrin-IX biosynthesis; 5-aminolevulinate from L-glutamyl-tRNA(Glu): step 1/2. Its function is as follows. Catalyzes the NADPH-dependent reduction of glutamyl-tRNA(Glu) to glutamate 1-semialdehyde (GSA). The protein is Glutamyl-tRNA reductase of Escherichia coli O7:K1 (strain IAI39 / ExPEC).